The sequence spans 209 residues: Small ribosomal subunit protein uS4 (209 aa).

Residues 99–160 enclose the S4 RNA-binding domain; that stretch reads ARLDSVAYRM…RARASLRCKA (62 aa).

The protein belongs to the universal ribosomal protein uS4 family. In terms of assembly, part of the 30S ribosomal subunit. Contacts protein S5. The interaction surface between S4 and S5 is involved in control of translational fidelity.

Functionally, one of the primary rRNA binding proteins, it binds directly to 16S rRNA where it nucleates assembly of the body of the 30S subunit. Its function is as follows. With S5 and S12 plays an important role in translational accuracy. This chain is Small ribosomal subunit protein uS4, found in Dechloromonas aromatica (strain RCB).